Here is a 400-residue protein sequence, read N- to C-terminus: Chalcone synthase C2 (400 aa).

Cys168 is a catalytic residue.

It belongs to the thiolase-like superfamily. Chalcone/stilbene synthases family.

The enzyme catalyses (E)-4-coumaroyl-CoA + 3 malonyl-CoA + 3 H(+) = 2',4,4',6'-tetrahydroxychalcone + 3 CO2 + 4 CoA. Its pathway is secondary metabolite biosynthesis; flavonoid biosynthesis. Its function is as follows. The primary product of this enzyme is 4,2',4',6'-tetrahydroxychalcone (also termed naringenin-chalcone or chalcone) which can under specific conditions spontaneously isomerize into naringenin. The chain is Chalcone synthase C2 (C2) from Zea mays (Maize).